A 151-amino-acid chain; its full sequence is MRRAIFPGTFDPFTIGHYSVVKRALTFMDEVVIGIGINENKKTWFPTEKRVEMIEKLFADDPRVKVDAYDCLTIDFARAKEAQFIVRGIRTVHDFEYEETIADINRKLAGIETILLFTEPELTSISSTIVRELLQFGKDVTPFLPEGMKID.

Threonine 9 is a binding site for substrate. ATP is bound by residues 9-10 (TF) and histidine 17. Residues lysine 41, threonine 73, and arginine 87 each contribute to the substrate site. Residues 88-90 (GIR), glutamate 98, and 122-128 (LTSISST) contribute to the ATP site.

Belongs to the bacterial CoaD family. Homohexamer. Mg(2+) serves as cofactor.

The protein localises to the cytoplasm. The catalysed reaction is (R)-4'-phosphopantetheine + ATP + H(+) = 3'-dephospho-CoA + diphosphate. It functions in the pathway cofactor biosynthesis; coenzyme A biosynthesis; CoA from (R)-pantothenate: step 4/5. Reversibly transfers an adenylyl group from ATP to 4'-phosphopantetheine, yielding dephospho-CoA (dPCoA) and pyrophosphate. This Phocaeicola vulgatus (strain ATCC 8482 / DSM 1447 / JCM 5826 / CCUG 4940 / NBRC 14291 / NCTC 11154) (Bacteroides vulgatus) protein is Phosphopantetheine adenylyltransferase.